Reading from the N-terminus, the 424-residue chain is Sulfatase ppz1 (424 aa).

Ca(2+)-binding residues include D13, D203, and N204.

It belongs to the sulfatase family. Ca(2+) serves as cofactor.

Its function is as follows. Sulfatase; part of the gene cluster that mediates the biosynthesis of pyrrolopyrazines, secondary metabolites showing insecticidal activity. The role of ppz1 within the pathway has still to be determined. The single multifunctional NRPS ppzA is sufficient to produce peramine via condensation of 1-pyrroline-5-carboxylate and arginine, N-methylation of the alpha-amino group of arginine and reduction of the thioester and the cyclization to form an iminium ion resulting in release from the peptide synthetase. Deprotonation of this intermediate and oxidation of the pyrroline ring would give rise to peramine. In Epichloe species that produce only peramine, the peramine synthetase gene is not localized in a gene cluster, in contrast to Metarhizium species that contain additional pyrrolopyrazine biosynthesis genes. The 2-oxoglutarate-Fe(II) type oxidoreductase ppzC hydroxylates peramine to yield the newly identified compound 8-hydroxyperamine whereas ppzD converts L-proline into trans-4-hydroxy-L-proline, a precursor of peramine biosynthesis. This Metarhizium majus (strain ARSEF 297) protein is Sulfatase ppz1.